Here is an 89-residue protein sequence, read N- to C-terminus: Small ribosomal subunit protein uS19 (89 aa).

It belongs to the universal ribosomal protein uS19 family.

Functionally, protein S19 forms a complex with S13 that binds strongly to the 16S ribosomal RNA. The sequence is that of Small ribosomal subunit protein uS19 from Akkermansia muciniphila (strain ATCC BAA-835 / DSM 22959 / JCM 33894 / BCRC 81048 / CCUG 64013 / CIP 107961 / Muc).